Consider the following 352-residue polypeptide: Iron-sulfur cluster carrier protein (352 aa).

Gly114–Ser121 lines the ATP pocket.

It belongs to the Mrp/NBP35 ATP-binding proteins family. Homodimer. Interacts with BrxC.

Binds and transfers iron-sulfur (Fe-S) clusters to target apoproteins. Can hydrolyze ATP. In terms of biological role, negatively regulates the expression of hpr/scoC. The effect on hpr/scoC may be indirect. The sequence is that of Iron-sulfur cluster carrier protein (salA) from Bacillus subtilis (strain 168).